We begin with the raw amino-acid sequence, 540 residues long: Phosphoenolpyruvate carboxykinase (ATP) (540 aa).

R65 provides a ligand contact to substrate. K87 is modified (N6-acetyllysine). Substrate-binding residues include Y207 and K213. ATP contacts are provided by residues K213, H232, and 248-256 (GLSGTGKTT). Mn(2+) is bound by residues K213 and H232. A Mn(2+)-binding site is contributed by D269. ATP contacts are provided by residues E297, R333, 449-450 (RI), and T455. Substrate is bound at residue R333. N6-acetyllysine is present on K523.

The protein belongs to the phosphoenolpyruvate carboxykinase (ATP) family. Monomer. Requires Mn(2+) as cofactor.

Its subcellular location is the cytoplasm. It carries out the reaction oxaloacetate + ATP = phosphoenolpyruvate + ADP + CO2. The protein operates within carbohydrate biosynthesis; gluconeogenesis. Functionally, involved in the gluconeogenesis. Catalyzes the conversion of oxaloacetate (OAA) to phosphoenolpyruvate (PEP) through direct phosphoryl transfer between the nucleoside triphosphate and OAA. The protein is Phosphoenolpyruvate carboxykinase (ATP) of Shigella flexneri serotype 5b (strain 8401).